Consider the following 404-residue polypeptide: L-cysteine:1D-myo-inositol 2-amino-2-deoxy-alpha-D-glucopyranoside ligase (404 aa).

Cys47 provides a ligand contact to Zn(2+). L-cysteinyl-5'-AMP is bound by residues 47–50 (CGIT), Thr62, and 85–87 (NIT). The 'HIGH' region motif lies at 49–59 (ITPYDSTHLGH). The 'ERGGDP' region motif lies at 188-193 (ERGGDP). An L-cysteinyl-5'-AMP-binding site is contributed by Trp228. Cys232 contributes to the Zn(2+) binding site. 250–252 (GSD) provides a ligand contact to L-cysteinyl-5'-AMP. A Zn(2+)-binding site is contributed by His257. An L-cysteinyl-5'-AMP-binding site is contributed by Ile284. Residues 290-294 (KMSKS) carry the 'KMSKS' region motif.

The protein belongs to the class-I aminoacyl-tRNA synthetase family. MshC subfamily. Monomer. Zn(2+) is required as a cofactor.

It catalyses the reaction 1D-myo-inositol 2-amino-2-deoxy-alpha-D-glucopyranoside + L-cysteine + ATP = 1D-myo-inositol 2-(L-cysteinylamino)-2-deoxy-alpha-D-glucopyranoside + AMP + diphosphate + H(+). In terms of biological role, catalyzes the ATP-dependent condensation of GlcN-Ins and L-cysteine to form L-Cys-GlcN-Ins. This Corynebacterium striatum protein is L-cysteine:1D-myo-inositol 2-amino-2-deoxy-alpha-D-glucopyranoside ligase.